The chain runs to 141 residues: Large ribosomal subunit protein uL22 (141 aa).

It belongs to the universal ribosomal protein uL22 family. In terms of assembly, part of the 50S ribosomal subunit.

Its function is as follows. This protein binds specifically to 23S rRNA; its binding is stimulated by other ribosomal proteins, e.g. L4, L17, and L20. It is important during the early stages of 50S assembly. It makes multiple contacts with different domains of the 23S rRNA in the assembled 50S subunit and ribosome. The globular domain of the protein is located near the polypeptide exit tunnel on the outside of the subunit, while an extended beta-hairpin is found that lines the wall of the exit tunnel in the center of the 70S ribosome. In Frankia alni (strain DSM 45986 / CECT 9034 / ACN14a), this protein is Large ribosomal subunit protein uL22.